Consider the following 61-residue polypeptide: Alpha-conotoxin-like PnMGMR-02 (61 aa).

Positions 1–21 are cleaved as a signal peptide; it reads MGMRMMFTVFLLVVLATTVVS. Positions 22–44 are excised as a propeptide; it reads FTSDRASDGGNAAASDLIALTIK. 2 disulfide bridges follow: C46/C52 and C47/C60. Positions 48 to 50 are ser-Xaa-Pro motif, crucial for potent interaction with nAChR; it reads SRP. C60 is modified (cysteine amide).

Belongs to the conotoxin A superfamily. In terms of tissue distribution, expressed by the venom duct.

The protein localises to the secreted. In terms of biological role, alpha-conotoxins act on postsynaptic membranes, they bind to the nicotinic acetylcholine receptors (nAChR) and thus inhibit them. This toxin blocks mammalian nAChRs (alpha-7 &gt; alpha-3/beta-2). The chain is Alpha-conotoxin-like PnMGMR-02 from Conus pennaceus (Feathered cone).